The sequence spans 45 residues: Photosystem II reaction center protein K (45 aa).

Positions 1–8 (MEAALLLA) are excised as a propeptide. A helical membrane pass occupies residues 24–44 (LPLIPLFFLLLAFVWQAAVGF).

Belongs to the PsbK family. As to quaternary structure, PSII is composed of 1 copy each of membrane proteins PsbA, PsbB, PsbC, PsbD, PsbE, PsbF, PsbH, PsbI, PsbJ, PsbK, PsbL, PsbM, PsbT, PsbX, PsbY, PsbZ, Psb30/Ycf12, peripheral proteins PsbO, CyanoQ (PsbQ), PsbU, PsbV and a large number of cofactors. It forms dimeric complexes.

The protein localises to the cellular thylakoid membrane. In terms of biological role, one of the components of the core complex of photosystem II (PSII). PSII is a light-driven water:plastoquinone oxidoreductase that uses light energy to abstract electrons from H(2)O, generating O(2) and a proton gradient subsequently used for ATP formation. It consists of a core antenna complex that captures photons, and an electron transfer chain that converts photonic excitation into a charge separation. This is Photosystem II reaction center protein K from Picosynechococcus sp. (strain ATCC 27264 / PCC 7002 / PR-6) (Agmenellum quadruplicatum).